Reading from the N-terminus, the 119-residue chain is Large ribosomal subunit protein bL20 (119 aa).

This sequence belongs to the bacterial ribosomal protein bL20 family.

Functionally, binds directly to 23S ribosomal RNA and is necessary for the in vitro assembly process of the 50S ribosomal subunit. It is not involved in the protein synthesizing functions of that subunit. The protein is Large ribosomal subunit protein bL20 of Sorangium cellulosum (strain So ce56) (Polyangium cellulosum (strain So ce56)).